The chain runs to 300 residues: UDP-N-acetylenolpyruvoylglucosamine reductase (300 aa).

Positions 30–194 constitute an FAD-binding PCMH-type domain; that stretch reads KVGGPADFFA…LAAVFSLAAG (165 aa). R174 is an active-site residue. S223 functions as the Proton donor in the catalytic mechanism. E293 is an active-site residue.

Belongs to the MurB family. FAD serves as cofactor.

The protein resides in the cytoplasm. The catalysed reaction is UDP-N-acetyl-alpha-D-muramate + NADP(+) = UDP-N-acetyl-3-O-(1-carboxyvinyl)-alpha-D-glucosamine + NADPH + H(+). The protein operates within cell wall biogenesis; peptidoglycan biosynthesis. Its function is as follows. Cell wall formation. In Geotalea uraniireducens (strain Rf4) (Geobacter uraniireducens), this protein is UDP-N-acetylenolpyruvoylglucosamine reductase.